The primary structure comprises 214 residues: uncharacterized protein (214 aa).

This is an uncharacterized protein from Methanocaldococcus jannaschii (strain ATCC 43067 / DSM 2661 / JAL-1 / JCM 10045 / NBRC 100440) (Methanococcus jannaschii).